The primary structure comprises 334 residues: MSGFGDFTSICETAPLPLCASVGPTLQATGRTGIEPECYARNIELANTIIFEGAASVMHIVALIMTVIMILHVRSKFTAVGRKEILSFFYLYMLLTAMSLIIDAGVAPPGSDPYPYFVSVQNGLSSAVITCLLINGFVGFQLYEDGTPLSVWMMRISSLAAFAISFLVSLATFKSWAGLGPTNTVGLFVVLYLLNAVQLFVYVAMQILLVTRTLQDRWPLGDIAFGIFFFVAGQVLLYAFSSKICIAISHYLDGLFLATVCNLLGVMMVYKYWDSITKEDLEFSVGTRMNNWEVKELLPEEDRRATVFSEDPYAQSSSYDLPYSPGVARYSAKY.

7 consecutive transmembrane segments (helical) span residues 49 to 69 (IIFEGAASVMHIVALIMTVIM), 85 to 105 (ILSFFYLYMLLTAMSLIIDAG), 123 to 143 (GLSSAVITCLLINGFVGFQLY), 159 to 179 (LAAFAISFLVSLATFKSWAGL), 185 to 205 (VGLFVVLYLLNAVQLFVYVAM), 220 to 240 (LGDIAFGIFFFVAGQVLLYAF), and 244 to 264 (ICIAISHYLDGLFLATVCNLL).

This sequence belongs to the CHS7 family.

Its subcellular location is the endoplasmic reticulum membrane. Functionally, chaperone required for the export of the chitin synthase chs3 from the endoplasmic reticulum. Plays a critical role in cell wall integrity and virulence. In Fusarium oxysporum f. sp. lycopersici (strain 4287 / CBS 123668 / FGSC 9935 / NRRL 34936) (Fusarium vascular wilt of tomato), this protein is Chitin synthase export chaperone.